Here is a 791-residue protein sequence, read N- to C-terminus: Ribosome biogenesis protein ERB1 (791 aa).

The span at Met1 to Glu12 shows a compositional bias: polar residues. Disordered stretches follow at residues Met1–Asp60 and Ala68–Gly87. Acidic residues-rich tracts occupy residues Glu25–Asp60 and Glu69–Gly87. Positions Arg254–Ser372 are required for interaction with NOP7. The interval Ser372–Thr408 is required for interaction with YTM1. WD repeat units lie at residues Gly424–Gln463, Asn472–Glu512, Thr576–Pro618, Lys621–Lys659, Pro662–Lys701, Tyr705–Lys744, and Val760–Thr791.

The protein belongs to the WD repeat BOP1/ERB1 family. In terms of assembly, component of the NOP7 complex, composed of ERB1, NOP7 and YTM1. The complex is held together by ERB1, which interacts with NOP7 via its N-terminal domain and with YTM1 via a high-affinity interaction between the seven-bladed beta-propeller domains of the 2 proteins. The NOP7 complex associates with the 66S pre-ribosome.

It is found in the nucleus. Its subcellular location is the nucleolus. It localises to the nucleoplasm. Component of the NOP7 complex, which is required for maturation of the 25S and 5.8S ribosomal RNAs and formation of the 60S ribosome. This Kluyveromyces lactis (strain ATCC 8585 / CBS 2359 / DSM 70799 / NBRC 1267 / NRRL Y-1140 / WM37) (Yeast) protein is Ribosome biogenesis protein ERB1.